The chain runs to 927 residues: DNA-binding protein RFX6 (927 aa).

Disordered regions lie at residues 1 to 21 (MAKVRELEEAFVQEQPSPQLP) and 81 to 108 (NFSSEEEDADTQESKTKAADPQLSQKKS). The RFX-type winged-helix DNA-binding region spans 123 to 198 (TLQWLEDNYI…YHYYGIGIKE (76 aa)).

Belongs to the RFX family. As to quaternary structure, interacts with RFX3. In the adult pancreas, expression is restricted to the islets where it could be detected in all endocrine lineages.

It is found in the nucleus. Functionally, transcription factor required to direct islet cell differentiation during endocrine pancreas development. Specifically required for the differentiation of 4 of the 5 islet cell types and for the production of insulin. Not required for pancreatic PP (polypeptide-producing) cells differentiation. Acts downstream of NEUROG3 and regulates the transcription factors involved in beta-cell maturation and function, thereby restricting the expression of the beta-cell differentiation and specification genes, and thus the beta-cell fate choice. Activates transcription by forming a heterodimer with RFX3 and binding to the X-box in the promoter of target genes. Involved in glucose-stimulated insulin secretion by promoting insulin and L-type calcium channel gene transcription. The chain is DNA-binding protein RFX6 (Rfx6) from Mus musculus (Mouse).